The primary structure comprises 614 residues: Phosphomethylpyrimidine synthase (614 aa).

Substrate is bound by residues Asn-226, Met-255, Tyr-284, His-320, 340-342 (SRG), 381-384 (DGLR), and Glu-420. His-424 contacts Zn(2+). Tyr-447 is a binding site for substrate. His-488 provides a ligand contact to Zn(2+). [4Fe-4S] cluster contacts are provided by Cys-568, Cys-571, and Cys-576.

It belongs to the ThiC family. As to quaternary structure, homodimer. The cofactor is [4Fe-4S] cluster.

The catalysed reaction is 5-amino-1-(5-phospho-beta-D-ribosyl)imidazole + S-adenosyl-L-methionine = 4-amino-2-methyl-5-(phosphooxymethyl)pyrimidine + CO + 5'-deoxyadenosine + formate + L-methionine + 3 H(+). It functions in the pathway cofactor biosynthesis; thiamine diphosphate biosynthesis. Catalyzes the synthesis of the hydroxymethylpyrimidine phosphate (HMP-P) moiety of thiamine from aminoimidazole ribotide (AIR) in a radical S-adenosyl-L-methionine (SAM)-dependent reaction. The chain is Phosphomethylpyrimidine synthase from Acidovorax ebreus (strain TPSY) (Diaphorobacter sp. (strain TPSY)).